The following is a 34-amino-acid chain: Kappa-theraphotoxin-Sc1a (34 aa).

Cystine bridges form between Cys2-Cys16, Cys9-Cys21, and Cys15-Cys28. The residue at position 34 (Ile34) is an Isoleucine amide.

This sequence belongs to the neurotoxin 10 (Hwtx-1) family. 57 (ScTx1) subfamily. Expressed by the venom gland.

It is found in the secreted. Functionally, acts as a gating-modifier to inhibit voltage-gated potassium channels. It inhibits delayed Kv2.1/KCNB1 (IC(50) is 12.7 nM), Kv2.1/Kv9.3 (IC(50) is 7.2 nM) (KCNB1/KCNS3), Kv2.2/KCNB2 (IC(50) is 21.4 nM), and transient Kv4.2/KCND2 (IC(50) is 1.2 nM) channels. The polypeptide is Kappa-theraphotoxin-Sc1a (Stromatopelma calceatum (Featherleg baboon tarantula)).